The primary structure comprises 436 residues: Methionine aminopeptidase 2 (436 aa).

A disordered region spans residues 1-61 (MSEIQPKTEV…KKKKAAPVAS (61 aa)). Over residues 16–26 (EEEEESDDEED) the composition is skewed to acidic residues. Basic residues predominate over residues 44–56 (KKKKKKNKKKKKA). H191 contacts substrate. Residues D211, D222, and H291 each coordinate a divalent metal cation. H299 is a binding site for substrate. The a divalent metal cation site is built by E324 and E417.

Belongs to the peptidase M24A family. Methionine aminopeptidase eukaryotic type 2 subfamily. Requires Co(2+) as cofactor. Zn(2+) is required as a cofactor. It depends on Mn(2+) as a cofactor. The cofactor is Fe(2+).

The protein resides in the cytoplasm. The catalysed reaction is Release of N-terminal amino acids, preferentially methionine, from peptides and arylamides.. Functionally, cotranslationally removes the N-terminal methionine from nascent proteins. The N-terminal methionine is often cleaved when the second residue in the primary sequence is small and uncharged (Met-Ala-, Cys, Gly, Pro, Ser, Thr, or Val). This is Methionine aminopeptidase 2 (metap2) from Dictyostelium discoideum (Social amoeba).